The chain runs to 468 residues: Glucose transport protein (468 aa).

At 1–17 (MNPSSSPSQSTANVKFV) the chain is on the cytoplasmic side. The chain crosses the membrane as a helical span at residues 18 to 38 (LLISGVAALGGFLFGFDTAVI). Residues 39–58 (NGAVAALQKHFQTDSLLTGL) lie on the Extracellular side of the membrane. A helical membrane pass occupies residues 59 to 78 (SVSLALLGSALGAFGAGPIA). Residues 79–84 (DRHGRI) are Cytoplasmic-facing. A helical membrane pass occupies residues 85–105 (KTMILAAVLFTLSSIGSGLPF). At 106 to 114 (TIWDFIFWR) the chain is on the extracellular side. A helical transmembrane segment spans residues 115–135 (VLGGIGVGAASVIAPAYIAEV). The Cytoplasmic portion of the chain corresponds to 136 to 149 (SPAHLRGRLGSLQQ). Residues 150 to 170 (LAIVSGIFIALLSNWFIALMA) traverse the membrane as a helical segment. Residues 171–186 (GGSAQNPWLFGAAAWR) are Extracellular-facing. A helical membrane pass occupies residues 187–207 (WMFWTELIPALLYGVCAFLIP). The Cytoplasmic segment spans residues 208 to 265 (ESPRYLVAQGQGEKAAAILWKVEGGDVPSRIEEIQATVSLDHKPRFSDLLSRRGGLLP). The helical transmembrane segment at 266-286 (IVWIGMGLSALQQFVGINVIF) threads the bilayer. Residues 287-307 (YYSSVLWRSVGFTEEKSLLIT) are Extracellular-facing. A helical transmembrane segment spans residues 308–328 (VITGFINILTTLVAIAFVDKF). The Cytoplasmic portion of the chain corresponds to 329-331 (GRK). Residues 332–352 (PLLLMGSIGMTITLGILSVVF) form a helical membrane-spanning segment. The Extracellular portion of the chain corresponds to 353–366 (GGATVVNGQPTLTG). Residues 367–387 (AAGIIALVTANLYVFSFGFSW) form a helical membrane-spanning segment. The Cytoplasmic segment spans residues 388–412 (GPIVWVLLGEMFNNKIRAAALSVAA). A helical membrane pass occupies residues 413–433 (GVQWIANFIISTTFPPLLDTV). The Extracellular portion of the chain corresponds to 434 to 436 (GLG). Residues 437-457 (PAYGLYATSAAISIFFIWFFV) form a helical membrane-spanning segment. Topologically, residues 458-468 (KETKGKTLEQM) are cytoplasmic.

It belongs to the major facilitator superfamily. Sugar transporter (TC 2.A.1.1) family.

The protein localises to the cell membrane. This Synechocystis sp. (strain ATCC 27184 / PCC 6803 / Kazusa) protein is Glucose transport protein (gtr).